A 428-amino-acid polypeptide reads, in one-letter code: Secernin-2 (428 aa).

The active site involves cysteine 10.

Belongs to the peptidase C69 family. Secernin subfamily.

In Xenopus laevis (African clawed frog), this protein is Secernin-2 (scrn2).